The chain runs to 122 residues: Small ribosomal subunit protein bS6 (122 aa).

Belongs to the bacterial ribosomal protein bS6 family.

In terms of biological role, binds together with bS18 to 16S ribosomal RNA. The chain is Small ribosomal subunit protein bS6 (rpsF) from Neisseria meningitidis serogroup B (strain ATCC BAA-335 / MC58).